A 327-amino-acid chain; its full sequence is uncharacterized protein (327 aa).

A helical transmembrane segment spans residues 12 to 32 (LVVVVVAIAIFTLVLLMLWEG). The interval 149 to 170 (AFSAVETSEGSDQESEGADEQG) is disordered. Residues 157-167 (EGSDQESEGAD) show a composition bias toward acidic residues. Residues 162–227 (ESEGADEQGK…LDEENREVAE (66 aa)) adopt a coiled-coil conformation.

The protein localises to the membrane. This is an uncharacterized protein from Encephalitozoon cuniculi (strain GB-M1) (Microsporidian parasite).